Consider the following 269-residue polypeptide: Diaminopimelate epimerase (269 aa).

Positions 13, 46, and 65 each coordinate substrate. The Proton donor role is filled by cysteine 74. Substrate-binding positions include 75–76 (GN), asparagine 149, asparagine 182, and 200–201 (ER). The active-site Proton acceptor is cysteine 209. 210 to 211 (GT) provides a ligand contact to substrate.

This sequence belongs to the diaminopimelate epimerase family. In terms of assembly, homodimer.

The protein resides in the cytoplasm. The catalysed reaction is (2S,6S)-2,6-diaminopimelate = meso-2,6-diaminopimelate. The protein operates within amino-acid biosynthesis; L-lysine biosynthesis via DAP pathway; DL-2,6-diaminopimelate from LL-2,6-diaminopimelate: step 1/1. Catalyzes the stereoinversion of LL-2,6-diaminopimelate (L,L-DAP) to meso-diaminopimelate (meso-DAP), a precursor of L-lysine and an essential component of the bacterial peptidoglycan. The chain is Diaminopimelate epimerase from Zymomonas mobilis subsp. mobilis (strain ATCC 31821 / ZM4 / CP4).